A 267-amino-acid polypeptide reads, in one-letter code: Undecaprenyl-diphosphatase (267 aa).

7 helical membrane passes run 1-21 (MSLFTLFLLALVQGITEFLPI), 40-60 (GQAIDVAVHVGTLGAVILYFW), 85-105 (LAFLLIIATIPVIIFGLFLEV), 112-132 (LRSIAVIGWTMLIFGLVLYWA), 189-209 (AMLMSIPTIIATGVFAGAEVI), 219-239 (DGAIAAALSFLAALAALTLMF), and 245-265 (VSFTPYVIYRVILGVILLVIA).

The protein belongs to the UppP family.

The protein localises to the cell inner membrane. The catalysed reaction is di-trans,octa-cis-undecaprenyl diphosphate + H2O = di-trans,octa-cis-undecaprenyl phosphate + phosphate + H(+). Functionally, catalyzes the dephosphorylation of undecaprenyl diphosphate (UPP). Confers resistance to bacitracin. This chain is Undecaprenyl-diphosphatase, found in Jannaschia sp. (strain CCS1).